The following is a 243-amino-acid chain: MYEVKLDAFNGPLDLLLHLIQKFEIDIYDIPMQALTEQYMQYVHAMKQLEINIASEYLVLASELLMIKSKMLLPQSTSDMDVDDDPREDLVGRLIEYQNYKEYTAILNDMKEERDFYFTKRPTDLSHLETDESWDPNHTIDLTELIVAYQRVKNRVELNTPKSVEIRKETFTIQQATEQVTSRLKDKDHFNFFSLFTFSEPIEQVVTHFLAILEMSKAGIINIEQQRNFEDINIIRGVNYHFG.

The protein belongs to the ScpA family. Component of a cohesin-like complex composed of ScpA, ScpB and the Smc homodimer, in which ScpA and ScpB bind to the head domain of Smc. The presence of the three proteins is required for the association of the complex with DNA.

The protein localises to the cytoplasm. Its function is as follows. Participates in chromosomal partition during cell division. May act via the formation of a condensin-like complex containing Smc and ScpB that pull DNA away from mid-cell into both cell halves. The chain is Segregation and condensation protein A from Staphylococcus aureus (strain NCTC 8325 / PS 47).